A 740-amino-acid polypeptide reads, in one-letter code: Elongation factor 2 (740 aa).

One can recognise a tr-type G domain in the interval 23-264; sequence AQIRNAGTLA…MIIEHVPPPN (242 aa). Residues 32–39, 98–102, and 152–155 contribute to the GTP site; these read AHVDHGKT, DTPGH, and NKID. Position 605 is a diphthamide (histidine 605).

Belongs to the TRAFAC class translation factor GTPase superfamily. Classic translation factor GTPase family. EF-G/EF-2 subfamily.

The protein localises to the cytoplasm. Its function is as follows. Catalyzes the GTP-dependent ribosomal translocation step during translation elongation. During this step, the ribosome changes from the pre-translocational (PRE) to the post-translocational (POST) state as the newly formed A-site-bound peptidyl-tRNA and P-site-bound deacylated tRNA move to the P and E sites, respectively. Catalyzes the coordinated movement of the two tRNA molecules, the mRNA and conformational changes in the ribosome. The sequence is that of Elongation factor 2 from Pyrobaculum arsenaticum (strain DSM 13514 / JCM 11321 / PZ6).